The chain runs to 366 residues: Cobalt-precorrin-5B C(1)-methyltransferase (366 aa).

The protein belongs to the CbiD family.

It carries out the reaction Co-precorrin-5B + S-adenosyl-L-methionine = Co-precorrin-6A + S-adenosyl-L-homocysteine. It functions in the pathway cofactor biosynthesis; adenosylcobalamin biosynthesis; cob(II)yrinate a,c-diamide from sirohydrochlorin (anaerobic route): step 6/10. In terms of biological role, catalyzes the methylation of C-1 in cobalt-precorrin-5B to form cobalt-precorrin-6A. This is Cobalt-precorrin-5B C(1)-methyltransferase from Methanococcus maripaludis (strain C7 / ATCC BAA-1331).